Reading from the N-terminus, the 278-residue chain is Diaminopimelate epimerase (278 aa).

Residues Asn11 and Asn75 each coordinate substrate. The active-site Proton donor is the Cys84. Substrate is bound by residues 85–86 (GN), Asn160, Asn195, and 213–214 (ER). Catalysis depends on Cys222, which acts as the Proton acceptor. 223-224 (GT) provides a ligand contact to substrate.

The protein belongs to the diaminopimelate epimerase family. In terms of assembly, homodimer.

It is found in the cytoplasm. The enzyme catalyses (2S,6S)-2,6-diaminopimelate = meso-2,6-diaminopimelate. The protein operates within amino-acid biosynthesis; L-lysine biosynthesis via DAP pathway; DL-2,6-diaminopimelate from LL-2,6-diaminopimelate: step 1/1. Its function is as follows. Catalyzes the stereoinversion of LL-2,6-diaminopimelate (L,L-DAP) to meso-diaminopimelate (meso-DAP), a precursor of L-lysine and an essential component of the bacterial peptidoglycan. This is Diaminopimelate epimerase from Corynebacterium aurimucosum (strain ATCC 700975 / DSM 44827 / CIP 107346 / CN-1) (Corynebacterium nigricans).